The following is a 229-amino-acid chain: RNA pyrophosphohydrolase (229 aa).

The region spanning glycine 6–threonine 149 is the Nudix hydrolase domain. The short motif at glycine 38–glycine 59 is the Nudix box element. The tract at residues lysine 191–alanine 229 is disordered. The span at leucine 220–alanine 229 shows a compositional bias: pro residues.

The protein belongs to the Nudix hydrolase family. RppH subfamily. The cofactor is a divalent metal cation.

Accelerates the degradation of transcripts by removing pyrophosphate from the 5'-end of triphosphorylated RNA, leading to a more labile monophosphorylated state that can stimulate subsequent ribonuclease cleavage. The polypeptide is RNA pyrophosphohydrolase (Acidovorax ebreus (strain TPSY) (Diaphorobacter sp. (strain TPSY))).